Consider the following 1097-residue polypeptide: FHIP family protein GK23746 (1097 aa).

Polar residues predominate over residues 1 to 21 (MSWLRSSPLRQSLTRTTSSGN). The disordered stretch occupies residues 1 to 25 (MSWLRSSPLRQSLTRTTSSGNGIRP). Ser491 bears the Phosphoserine mark. Disordered regions lie at residues 639–684 (DVSA…SGRR), 820–856 (NENS…RSAY), and 932–1042 (NNQQ…SEPV). The span at 641-654 (SASSGNGTGSVVVG) shows a compositional bias: low complexity. Ser823 bears the Phosphoserine mark. 2 stretches are compositionally biased toward low complexity: residues 824–852 (PLHQ…GAQQ) and 932–948 (NNQQ…SSSS). A compositionally biased stretch (polar residues) spans 949-962 (AVTTCETSLSTQPH). Low complexity predominate over residues 973–985 (TTSSTISTSSGTT). Residues 986 to 995 (AGSGGGGGSG) show a composition bias toward gly residues. 2 stretches are compositionally biased toward low complexity: residues 996–1006 (SNSSFSIGGST) and 1013–1022 (SNNTTNSSST).

The protein belongs to the FHIP family.

This chain is FHIP family protein GK23746, found in Drosophila willistoni (Fruit fly).